A 98-amino-acid chain; its full sequence is Large ribosomal subunit protein bL28 (98 aa).

Belongs to the bacterial ribosomal protein bL28 family.

In Thermus thermophilus (strain ATCC BAA-163 / DSM 7039 / HB27), this protein is Large ribosomal subunit protein bL28.